A 959-amino-acid chain; its full sequence is Glycine dehydrogenase (decarboxylating) (959 aa).

The residue at position 704 (Lys704) is an N6-(pyridoxal phosphate)lysine.

This sequence belongs to the GcvP family. The glycine cleavage system is composed of four proteins: P, T, L and H. Requires pyridoxal 5'-phosphate as cofactor.

The catalysed reaction is N(6)-[(R)-lipoyl]-L-lysyl-[glycine-cleavage complex H protein] + glycine + H(+) = N(6)-[(R)-S(8)-aminomethyldihydrolipoyl]-L-lysyl-[glycine-cleavage complex H protein] + CO2. Functionally, the glycine cleavage system catalyzes the degradation of glycine. The P protein binds the alpha-amino group of glycine through its pyridoxal phosphate cofactor; CO(2) is released and the remaining methylamine moiety is then transferred to the lipoamide cofactor of the H protein. The sequence is that of Glycine dehydrogenase (decarboxylating) from Parasynechococcus marenigrum (strain WH8102).